Consider the following 361-residue polypeptide: Porphobilinogen deaminase (361 aa).

Ser-2 is modified (N-acetylserine). Ser-69 bears the Phosphoserine mark. N6-acetyllysine is present on Lys-74. Position 147 is a phosphoserine (Ser-147). Cys-261 is subject to S-(dipyrrolylmethanemethyl)cysteine.

This sequence belongs to the HMBS family. Monomer. Requires dipyrromethane as cofactor.

It localises to the cytoplasm. Its subcellular location is the cytosol. It catalyses the reaction 4 porphobilinogen + H2O = hydroxymethylbilane + 4 NH4(+). The protein operates within porphyrin-containing compound metabolism; protoporphyrin-IX biosynthesis; coproporphyrinogen-III from 5-aminolevulinate: step 2/4. As part of the heme biosynthetic pathway, catalyzes the sequential polymerization of four molecules of porphobilinogen to form hydroxymethylbilane, also known as preuroporphyrinogen. Catalysis begins with the assembly of the dipyrromethane cofactor by the apoenzyme from two molecules of porphobilinogen or from preuroporphyrinogen. The covalently linked cofactor acts as a primer, around which the tetrapyrrole product is assembled. In the last step of catalysis, the product, preuroporphyrinogen, is released, leaving the cofactor bound to the holodeaminase intact. This is Porphobilinogen deaminase (Hmbs) from Mus musculus (Mouse).